The sequence spans 303 residues: Ribonuclease Z (303 aa).

Positions 61, 63, 65, 66, 139, 207, and 266 each coordinate Zn(2+). The active-site Proton acceptor is D65.

This sequence belongs to the RNase Z family. In terms of assembly, homodimer. Requires Zn(2+) as cofactor.

The catalysed reaction is Endonucleolytic cleavage of RNA, removing extra 3' nucleotides from tRNA precursor, generating 3' termini of tRNAs. A 3'-hydroxy group is left at the tRNA terminus and a 5'-phosphoryl group is left at the trailer molecule.. In terms of biological role, zinc phosphodiesterase, which displays some tRNA 3'-processing endonuclease activity. Probably involved in tRNA maturation, by removing a 3'-trailer from precursor tRNA. The chain is Ribonuclease Z from Clostridium kluyveri (strain ATCC 8527 / DSM 555 / NBRC 12016 / NCIMB 10680 / K1).